Reading from the N-terminus, the 183-residue chain is CKLF-like MARVEL transmembrane domain-containing protein 6 (183 aa).

The residue at position 1 (Met-1) is an N-acetylmethionine. A disordered region spans residues 1 to 20; that stretch reads MENGAVYSPTTEEDPGPARG. At 1 to 39 the chain is on the cytoplasmic side; sequence MENGAVYSPTTEEDPGPARGPRSGLAAYCFLGRLPLLRR. Ser-8 carries the phosphoserine modification. The MARVEL domain occupies 33-160; the sequence is RLPLLRRVLK…DFVTMLYEKR (128 aa). The helical transmembrane segment at 40–60 threads the bilayer; the sequence is VLKGLQLSLSLLAFICEEVVS. Over 61–67 the chain is Extracellular; sequence QCTLCGG. The helical transmembrane segment at 68–88 threads the bilayer; sequence LYFFEFVSCSAFLLSLLILIV. Residues 89–106 lie on the Cytoplasmic side of the membrane; the sequence is YCTPFYERVDTTKVKSSD. A helical transmembrane segment spans residues 107–127; that stretch reads FYITLGTGCVFLLASIIFVST. The Extracellular segment spans residues 128–134; it reads HDRTSAE. Residues 135-155 form a helical membrane-spanning segment; the sequence is IAAIVFGFIASFMFLLDFVTM. At 156–183 the chain is on the cytoplasmic side; the sequence is LYEKRQESQLRKSENTTRAEALTEPLNA. A Phosphothreonine modification is found at Thr-171.

This sequence belongs to the chemokine-like factor family. In terms of assembly, interacts with PD-L1/CD274 (via transmembrane domain); the interaction is direct. Interacts with CMTM4. Interacts with CD58, ARG1, ENO1 and TMPO.

Its subcellular location is the cell membrane. It is found in the early endosome membrane. It localises to the recycling endosome membrane. Its function is as follows. Master regulator of recycling and plasma membrane expression of PD-L1/CD274, an immune inhibitory ligand critical for immune tolerance to self and antitumor immunity. Associates with both constitutive and IFNG-induced PD-L1/CD274 at recycling endosomes, where it protects PD-L1/CD274 from being targeted for lysosomal degradation, likely by preventing its ubiquitination. May stabilize PD-L1/CD274 expression on antigen presenting cells and potentiates inhibitory signaling by PDCD1/CD279, its receptor on T-cells, ultimately triggering T-cell anergy. The polypeptide is CKLF-like MARVEL transmembrane domain-containing protein 6 (CMTM6) (Pongo abelii (Sumatran orangutan)).